Consider the following 147-residue polypeptide: Small ribosomal subunit protein uS12 (147 aa).

This sequence belongs to the universal ribosomal protein uS12 family. Part of the 30S ribosomal subunit.

With S4 and S5 plays an important role in translational accuracy. Located at the interface of the 30S and 50S subunits. This chain is Small ribosomal subunit protein uS12, found in Methanococcus maripaludis (strain C5 / ATCC BAA-1333).